The primary structure comprises 278 residues: Urease accessory protein UreD (278 aa).

It belongs to the UreD family. As to quaternary structure, ureD, UreF and UreG form a complex that acts as a GTP-hydrolysis-dependent molecular chaperone, activating the urease apoprotein by helping to assemble the nickel containing metallocenter of UreC. The UreE protein probably delivers the nickel.

It is found in the cytoplasm. In terms of biological role, required for maturation of urease via the functional incorporation of the urease nickel metallocenter. This is Urease accessory protein UreD from Deinococcus radiodurans (strain ATCC 13939 / DSM 20539 / JCM 16871 / CCUG 27074 / LMG 4051 / NBRC 15346 / NCIMB 9279 / VKM B-1422 / R1).